The primary structure comprises 504 residues: ATP synthase subunit alpha (504 aa).

G169–T176 provides a ligand contact to ATP.

The protein belongs to the ATPase alpha/beta chains family. As to quaternary structure, F-type ATPases have 2 components, CF(1) - the catalytic core - and CF(0) - the membrane proton channel. CF(1) has five subunits: alpha(3), beta(3), gamma(1), delta(1), epsilon(1). CF(0) has three main subunits: a(1), b(2) and c(9-12). The alpha and beta chains form an alternating ring which encloses part of the gamma chain. CF(1) is attached to CF(0) by a central stalk formed by the gamma and epsilon chains, while a peripheral stalk is formed by the delta and b chains.

It localises to the cell membrane. It catalyses the reaction ATP + H2O + 4 H(+)(in) = ADP + phosphate + 5 H(+)(out). Produces ATP from ADP in the presence of a proton gradient across the membrane. The alpha chain is a regulatory subunit. The polypeptide is ATP synthase subunit alpha (Clostridium botulinum (strain Loch Maree / Type A3)).